The primary structure comprises 355 residues: Poly(3-hydroxyalkanoate) polymerase subunit PhaC (355 aa).

An AB hydrolase-1 domain is found at 69-334; the sequence is PLLIVYALVN…LAFPGGHIGI (266 aa). Residue Cys149 is part of the active site.

This sequence belongs to the PHA/PHB synthase family. Type III PhaC subfamily. As to quaternary structure, a large complex of PhaC and PhaE; the ratio of the subunits has been estimated to be from 1:1 to 4:1, with more PhaE than PhaC.

The protein localises to the cytoplasm. It catalyses the reaction (3R)-3-hydroxybutanoyl-CoA + [(3R)-hydroxybutanoate](n) = [(3R)-hydroxybutanoate](n+1) + CoA. Its pathway is biopolymer metabolism; poly-(R)-3-hydroxybutanoate biosynthesis. Its function is as follows. Polymerizes D(-)-3-hydroxybutyryl-CoA to create polyhydroxybutyrate (PHB) which consists of thousands of hydroxybutyrate molecules linked end to end. This subunit has catalytic activity that is enhanced 100-fold by PhaE, the non-catalytic subunit. In Allochromatium vinosum (strain ATCC 17899 / DSM 180 / NBRC 103801 / NCIMB 10441 / D) (Chromatium vinosum), this protein is Poly(3-hydroxyalkanoate) polymerase subunit PhaC.